We begin with the raw amino-acid sequence, 390 residues long: Large ribosomal subunit protein uL3y (390 aa).

A disordered region spans residues methionine 1–aspartate 36. Basic residues predominate over residues proline 18–alanine 31.

The protein belongs to the universal ribosomal protein uL3 family.

The protein resides in the cytoplasm. The chain is Large ribosomal subunit protein uL3y (ARP2) from Arabidopsis thaliana (Mouse-ear cress).